The sequence spans 250 residues: MADS-box transcription factor 47 (250 aa).

The span at 1–10 (MAGGGGGGGR) shows a compositional bias: gly residues. 2 disordered regions span residues 1–20 (MAGGGGGGGRGEGEGRAATG) and 196–250 (SRME…FSSK). Residues 11 to 20 (GEGEGRAATG) show a composition bias toward basic and acidic residues. The MADS-box domain occupies 20–80 (GKRERIAIRR…GKLFQFASTS (61 aa)). Residues 106-198 (QGEDSSTCAR…QLQVSRMSRM (93 aa)) enclose the K-box domain. Residues 214–224 (GQSSESVTNAS) show a composition bias toward polar residues.

May interact with MADS18. Expressed in roots, shoots and developing panicles. Expressed in mature stems and leaves, flowering panicles, developing seeds, and mature seeds.

It localises to the nucleus. In terms of biological role, transcription factor that modulates expressions of multiple genes involved in cell signaling and gene transcription. Plays a negative regulatory role in brassinosteroid signaling. This chain is MADS-box transcription factor 47, found in Oryza sativa subsp. japonica (Rice).